The primary structure comprises 666 residues: tRNA 5-methylaminomethyl-2-thiouridine biosynthesis bifunctional protein MnmC (666 aa).

Positions Met-1–Glu-245 are tRNA (mnm(5)s(2)U34)-methyltransferase. Positions Ile-270 to Lys-666 are FAD-dependent cmnm(5)s(2)U34 oxidoreductase.

In the N-terminal section; belongs to the methyltransferase superfamily. tRNA (mnm(5)s(2)U34)-methyltransferase family. It in the C-terminal section; belongs to the DAO family. It depends on FAD as a cofactor.

It localises to the cytoplasm. The enzyme catalyses 5-aminomethyl-2-thiouridine(34) in tRNA + S-adenosyl-L-methionine = 5-methylaminomethyl-2-thiouridine(34) in tRNA + S-adenosyl-L-homocysteine + H(+). Functionally, catalyzes the last two steps in the biosynthesis of 5-methylaminomethyl-2-thiouridine (mnm(5)s(2)U) at the wobble position (U34) in tRNA. Catalyzes the FAD-dependent demodification of cmnm(5)s(2)U34 to nm(5)s(2)U34, followed by the transfer of a methyl group from S-adenosyl-L-methionine to nm(5)s(2)U34, to form mnm(5)s(2)U34. The polypeptide is tRNA 5-methylaminomethyl-2-thiouridine biosynthesis bifunctional protein MnmC (Salmonella typhi).